Consider the following 456-residue polypeptide: Adenylyltransferase and sulfurtransferase uba4 (456 aa).

Residues Gly101, Asp122, 129–133 (SNLHR), Lys146, and 161–162 (DH) contribute to the ATP site. The Zn(2+) site is built by Cys210 and Cys213. The active-site Glycyl thioester intermediate; for adenylyltransferase activity is Cys227. Zn(2+)-binding residues include Cys300 and Cys303. The 105-residue stretch at 350 to 454 (KEKEHLLIDV…WKEQVDGSWP (105 aa)) folds into the Rhodanese domain. Cys409 functions as the Cysteine persulfide intermediate; for sulfurtransferase activity in the catalytic mechanism.

It in the N-terminal section; belongs to the HesA/MoeB/ThiF family. UBA4 subfamily. Zn(2+) is required as a cofactor.

Its subcellular location is the cytoplasm. The protein localises to the cytosol. The enzyme catalyses [molybdopterin-synthase sulfur-carrier protein]-C-terminal Gly-Gly + ATP + H(+) = [molybdopterin-synthase sulfur-carrier protein]-C-terminal Gly-Gly-AMP + diphosphate. The catalysed reaction is [molybdopterin-synthase sulfur-carrier protein]-C-terminal Gly-Gly-AMP + S-sulfanyl-L-cysteinyl-[cysteine desulfurase] + AH2 = [molybdopterin-synthase sulfur-carrier protein]-C-terminal-Gly-aminoethanethioate + L-cysteinyl-[cysteine desulfurase] + A + AMP + 2 H(+). Its pathway is tRNA modification; 5-methoxycarbonylmethyl-2-thiouridine-tRNA biosynthesis. In terms of biological role, plays a central role in 2-thiolation of mcm(5)S(2)U at tRNA wobble positions of cytosolic tRNA(Lys), tRNA(Glu) and tRNA(Gln). Also essential during biosynthesis of the molybdenum cofactor. Acts by mediating the C-terminal thiocarboxylation of sulfur carriers urm1 and mocs2a. Its N-terminus first activates urm1 and mocs2a as acyl-adenylates (-COAMP), then the persulfide sulfur on the catalytic cysteine is transferred to urm1 and mocs2a to form thiocarboxylation (-COSH) of their C-terminus. The reaction probably involves hydrogen sulfide that is generated from the persulfide intermediate and that acts as a nucleophile towards urm1 and mocs2a. Subsequently, a transient disulfide bond is formed. Does not use thiosulfate as sulfur donor; nfs1 probably acting as a sulfur donor for thiocarboxylation reactions. The protein is Adenylyltransferase and sulfurtransferase uba4 of Sclerotinia sclerotiorum (strain ATCC 18683 / 1980 / Ss-1) (White mold).